A 402-amino-acid chain; its full sequence is Putative PDZ domain-containing protein PDZK1P1 (402 aa).

2 consecutive PDZ domains span residues 12-93 and 121-206; these read RLCY…VDKE and IVEM…VDKE. The tract at residues 230 to 258 is disordered; sequence GSVKEAPAPTPTSLEVSSPPDTTEEEDHK. Over residues 240 to 250 the composition is skewed to polar residues; it reads PTSLEVSSPPD. Residues 261-341 form the PDZ 3 domain; sequence LCRLAKGENG…NVTLLVCGKK (81 aa). Positions 362 to 402 are disordered; the sequence is DTPPDSKEGIVVESKHDSHMAKERAHSTASHSSSNSEDTEM. Positions 365-387 are enriched in basic and acidic residues; that stretch reads PDSKEGIVVESKHDSHMAKERAH. Over residues 388-402 the composition is skewed to low complexity; that stretch reads STASHSSSNSEDTEM.

This sequence belongs to the NHER family.

The polypeptide is Putative PDZ domain-containing protein PDZK1P1 (Homo sapiens (Human)).